We begin with the raw amino-acid sequence, 124 residues long: Putative iron-sulfur cluster insertion protein ErpA (124 aa).

Cysteine 52, cysteine 116, and cysteine 118 together coordinate iron-sulfur cluster.

Belongs to the HesB/IscA family. Homodimer. The cofactor is iron-sulfur cluster.

Functionally, required for insertion of 4Fe-4S clusters. The chain is Putative iron-sulfur cluster insertion protein ErpA from Ralstonia nicotianae (strain ATCC BAA-1114 / GMI1000) (Ralstonia solanacearum).